A 151-amino-acid polypeptide reads, in one-letter code: 3-hydroxyacyl-[acyl-carrier-protein] dehydratase FabZ (151 aa).

The active site involves His-49.

This sequence belongs to the thioester dehydratase family. FabZ subfamily.

It localises to the cytoplasm. The enzyme catalyses a (3R)-hydroxyacyl-[ACP] = a (2E)-enoyl-[ACP] + H2O. In terms of biological role, involved in unsaturated fatty acids biosynthesis. Catalyzes the dehydration of short chain beta-hydroxyacyl-ACPs and long chain saturated and unsaturated beta-hydroxyacyl-ACPs. This Bordetella parapertussis (strain 12822 / ATCC BAA-587 / NCTC 13253) protein is 3-hydroxyacyl-[acyl-carrier-protein] dehydratase FabZ.